A 157-amino-acid polypeptide reads, in one-letter code: 2-C-methyl-D-erythritol 2,4-cyclodiphosphate synthase (157 aa).

Residues D8 and H10 each contribute to the a divalent metal cation site. 4-CDP-2-C-methyl-D-erythritol 2-phosphate is bound by residues 8-10 (DVH) and 34-35 (HS). H42 lines the a divalent metal cation pocket. 4-CDP-2-C-methyl-D-erythritol 2-phosphate-binding positions include 56 to 58 (DIG), 132 to 135 (TTNE), and R142.

This sequence belongs to the IspF family. As to quaternary structure, homotrimer. A divalent metal cation is required as a cofactor.

The enzyme catalyses 4-CDP-2-C-methyl-D-erythritol 2-phosphate = 2-C-methyl-D-erythritol 2,4-cyclic diphosphate + CMP. The protein operates within isoprenoid biosynthesis; isopentenyl diphosphate biosynthesis via DXP pathway; isopentenyl diphosphate from 1-deoxy-D-xylulose 5-phosphate: step 4/6. Involved in the biosynthesis of isopentenyl diphosphate (IPP) and dimethylallyl diphosphate (DMAPP), two major building blocks of isoprenoid compounds. Catalyzes the conversion of 4-diphosphocytidyl-2-C-methyl-D-erythritol 2-phosphate (CDP-ME2P) to 2-C-methyl-D-erythritol 2,4-cyclodiphosphate (ME-CPP) with a corresponding release of cytidine 5-monophosphate (CMP). In Chlorobaculum parvum (strain DSM 263 / NCIMB 8327) (Chlorobium vibrioforme subsp. thiosulfatophilum), this protein is 2-C-methyl-D-erythritol 2,4-cyclodiphosphate synthase.